We begin with the raw amino-acid sequence, 630 residues long: tRNA uridine 5-carboxymethylaminomethyl modification enzyme MnmG (630 aa).

13 to 18 (GGGHAG) contacts FAD. 273–287 (GPRYCPSIEDKIHRF) provides a ligand contact to NAD(+).

It belongs to the MnmG family. As to quaternary structure, homodimer. Heterotetramer of two MnmE and two MnmG subunits. The cofactor is FAD.

The protein localises to the cytoplasm. NAD-binding protein involved in the addition of a carboxymethylaminomethyl (cmnm) group at the wobble position (U34) of certain tRNAs, forming tRNA-cmnm(5)s(2)U34. This chain is tRNA uridine 5-carboxymethylaminomethyl modification enzyme MnmG, found in Pseudomonas putida (strain W619).